A 306-amino-acid chain; its full sequence is Manganese transport system membrane protein MntB (306 aa).

Residues 1–25 lie on the Periplasmic side of the membrane; that stretch reads MNQLVVAFPFWHWLVEPLQYEFLIR. The helical transmembrane segment at 26-46 threads the bilayer; the sequence is AIWVSAFVGLVCAVLSCYITL. The Cytoplasmic segment spans residues 47–48; sequence KG. Residues 49–69 traverse the membrane as a helical segment; sequence WSLMGDAISHAVVPGVVLAYA. The Periplasmic segment spans residues 70-71; that stretch reads LN. The helical transmembrane segment at 72–92 threads the bilayer; that stretch reads IPFAIGAFTFGFGATVAIGYV. Over 93-101 the chain is Cytoplasmic; that stretch reads KSKTRLKED. Residues 102–122 traverse the membrane as a helical segment; it reads AVIGIVFTGFFALGLVLVTKI. The Periplasmic portion of the chain corresponds to 123–141; it reads PSNVDLFHILFGNVLGISQ. Residues 142-162 traverse the membrane as a helical segment; sequence QDIIQTLIAGSITLIVILLRR. At 163 to 179 the chain is on the cytoplasmic side; that stretch reads KDLLLFCFDPNHAKAIG. Residues 180–200 traverse the membrane as a helical segment; the sequence is LRTQVMYYTLLSVLALTIVAA. Over 201–202 the chain is Periplasmic; that stretch reads LQ. Residues 203 to 223 form a helical membrane-spanning segment; that stretch reads TAGIILVISMLVTPGSIGYLL. Topologically, residues 224-228 are cytoplasmic; that stretch reads SDRFD. A helical transmembrane segment spans residues 229 to 249; it reads HMLWYSVVSSVLSCVLGTYLS. The Periplasmic portion of the chain corresponds to 250–255; the sequence is YHFDVS. Residues 256-276 form a helical membrane-spanning segment; sequence TGGMIVVILTTLFVIAMIGAP. Residues 277–306 lie on the Cytoplasmic side of the membrane; sequence KYGILAQEWRKRSGPNPEDDENQTVVVDQV.

Belongs to the ABC-3 integral membrane protein family.

The protein localises to the cell membrane. In terms of biological role, part of an ATP-driven transport system for manganese. This chain is Manganese transport system membrane protein MntB (mntB), found in Synechocystis sp. (strain ATCC 27184 / PCC 6803 / Kazusa).